Consider the following 177-residue polypeptide: Large ribosomal subunit protein uL6 (177 aa).

The protein belongs to the universal ribosomal protein uL6 family. In terms of assembly, part of the 50S ribosomal subunit.

This protein binds to the 23S rRNA, and is important in its secondary structure. It is located near the subunit interface in the base of the L7/L12 stalk, and near the tRNA binding site of the peptidyltransferase center. The polypeptide is Large ribosomal subunit protein uL6 (Shewanella frigidimarina (strain NCIMB 400)).